We begin with the raw amino-acid sequence, 196 residues long: Putative tyrosine-protein phosphatase OCA1 (196 aa).

Residues 33–192 (NFCPVEKQLY…SVQIDPTKMP (160 aa)) enclose the Tyrosine-protein phosphatase domain. Cys130 acts as the Phosphocysteine intermediate in catalysis.

It belongs to the protein-tyrosine phosphatase family.

The protein localises to the cytoplasm. It carries out the reaction O-phospho-L-tyrosyl-[protein] + H2O = L-tyrosyl-[protein] + phosphate. Functionally, putative tyrosine-protein phosphatase required for protection against superoxide stress. The chain is Putative tyrosine-protein phosphatase OCA1 (OCA1) from Debaryomyces hansenii (strain ATCC 36239 / CBS 767 / BCRC 21394 / JCM 1990 / NBRC 0083 / IGC 2968) (Yeast).